The sequence spans 176 residues: Lipoprotein signal peptidase (176 aa).

The next 4 membrane-spanning stretches (helical) occupy residues 26–46 (LWMAFALLVVVLDQFFKIVIV), 60–80 (FFNLVLVYNKGAAFSFLADAG), 82–102 (WQRWFFTGLGLVVGAFIVWLL), and 107–127 (GQKLFCFAVSLILGGAVGNVV). Residues aspartate 137 and aspartate 155 contribute to the active site. Residues 147–167 (HWPAFNVADCAITVGAVLLIV) traverse the membrane as a helical segment.

This sequence belongs to the peptidase A8 family.

It is found in the cell inner membrane. It catalyses the reaction Release of signal peptides from bacterial membrane prolipoproteins. Hydrolyzes -Xaa-Yaa-Zaa-|-(S,diacylglyceryl)Cys-, in which Xaa is hydrophobic (preferably Leu), and Yaa (Ala or Ser) and Zaa (Gly or Ala) have small, neutral side chains.. The protein operates within protein modification; lipoprotein biosynthesis (signal peptide cleavage). Its function is as follows. This protein specifically catalyzes the removal of signal peptides from prolipoproteins. The chain is Lipoprotein signal peptidase from Cupriavidus pinatubonensis (strain JMP 134 / LMG 1197) (Cupriavidus necator (strain JMP 134)).